A 357-amino-acid polypeptide reads, in one-letter code: Holliday junction branch migration complex subunit RuvB (357 aa).

Residues 1-10 (MAIQSDSLSS) are compositionally biased toward polar residues. The disordered stretch occupies residues 1–30 (MAIQSDSLSSRPDAPRLVAPAPASPNEESI). Positions 5–195 (SDSLSSRPDA…FGIVSRLEFY (191 aa)) are large ATPase domain (RuvB-L). ATP contacts are provided by residues Leu34, Arg35, Gly76, Lys79, Thr80, Thr81, 142-144 (EDF), Arg185, Tyr195, and Arg232. Mg(2+) is bound at residue Thr80. Residues 196–266 (NTDDLAHIVT…AANQALAMLE (71 aa)) are small ATPAse domain (RuvB-S). The interval 269–357 (PQGLDLMDRK…QPSSGDLFGA (89 aa)) is head domain (RuvB-H). Arg305, Arg324, and Arg329 together coordinate DNA.

It belongs to the RuvB family. In terms of assembly, homohexamer. Forms an RuvA(8)-RuvB(12)-Holliday junction (HJ) complex. HJ DNA is sandwiched between 2 RuvA tetramers; dsDNA enters through RuvA and exits via RuvB. An RuvB hexamer assembles on each DNA strand where it exits the tetramer. Each RuvB hexamer is contacted by two RuvA subunits (via domain III) on 2 adjacent RuvB subunits; this complex drives branch migration. In the full resolvosome a probable DNA-RuvA(4)-RuvB(12)-RuvC(2) complex forms which resolves the HJ.

It localises to the cytoplasm. It catalyses the reaction ATP + H2O = ADP + phosphate + H(+). Its function is as follows. The RuvA-RuvB-RuvC complex processes Holliday junction (HJ) DNA during genetic recombination and DNA repair, while the RuvA-RuvB complex plays an important role in the rescue of blocked DNA replication forks via replication fork reversal (RFR). RuvA specifically binds to HJ cruciform DNA, conferring on it an open structure. The RuvB hexamer acts as an ATP-dependent pump, pulling dsDNA into and through the RuvAB complex. RuvB forms 2 homohexamers on either side of HJ DNA bound by 1 or 2 RuvA tetramers; 4 subunits per hexamer contact DNA at a time. Coordinated motions by a converter formed by DNA-disengaged RuvB subunits stimulates ATP hydrolysis and nucleotide exchange. Immobilization of the converter enables RuvB to convert the ATP-contained energy into a lever motion, pulling 2 nucleotides of DNA out of the RuvA tetramer per ATP hydrolyzed, thus driving DNA branch migration. The RuvB motors rotate together with the DNA substrate, which together with the progressing nucleotide cycle form the mechanistic basis for DNA recombination by continuous HJ branch migration. Branch migration allows RuvC to scan DNA until it finds its consensus sequence, where it cleaves and resolves cruciform DNA. The polypeptide is Holliday junction branch migration complex subunit RuvB (Bordetella avium (strain 197N)).